The primary structure comprises 60 residues: UPF0434 protein SG0997 (60 aa).

This sequence belongs to the UPF0434 family.

The polypeptide is UPF0434 protein SG0997 (Sodalis glossinidius (strain morsitans)).